The sequence spans 147 residues: Heavy metal-dependent transcription regulator 1 (147 aa).

An HTH merR-type domain is found at 1 to 70 (MNIGQASKVV…VEQIKDLLAL (70 aa)). Positions 3–22 (IGQASKVVSGVSSKMIRYYE) form a DNA-binding region, H-T-H motif.

Its subcellular location is the cytoplasm. Its function is as follows. Transcriptional regulator involved in acid tolerance. Binds copper. The chain is Heavy metal-dependent transcription regulator 1 (hmrR1) from Rhizobium meliloti (strain 1021) (Ensifer meliloti).